The following is a 156-amino-acid chain: V-type proton ATPase 16 kDa proteolipid subunit c (156 aa).

At 1-7 (MAENPIY) the chain is on the lumenal side. A helical transmembrane segment spans residues 8 to 30 (GPFFGVMGAASAIIFSALGAAYG). The Cytoplasmic portion of the chain corresponds to 31–52 (TAKSGTGIAAMSVMRPELIMKS). A helical membrane pass occupies residues 53 to 73 (IIPVVMAGIIAIYGLVVAVLI). The Lumenal portion of the chain corresponds to 74-92 (AGSLDSPSNNYTLYRGFIH). The chain crosses the membrane as a helical span at residues 93 to 114 (LGAGLAVGFSGLAAGFAIGIVG). The Cytoplasmic portion of the chain corresponds to 115–126 (DAGVRGTAQQPR). The helical transmembrane segment at 127–152 (LFVGMILILIFAEVLGLYGLIVAIYL) threads the bilayer. Topologically, residues 153–156 (YTKQ) are lumenal.

Belongs to the V-ATPase proteolipid subunit family. V-ATPase is a heteromultimeric enzyme made up of two complexes: the ATP-hydrolytic V1 complex and the proton translocation V0 complex. The V1 complex consists of three catalytic AB heterodimers that form a heterohexamer, three peripheral stalks each consisting of EG heterodimers, one central rotor including subunits D and F, and the regulatory subunits C and H. The proton translocation complex V0 consists of the proton transport subunit a, a ring of proteolipid subunits c9c'', rotary subunit d, subunits e and f, and the accessory subunits VhaAC45 and ATP6AP2.

Its subcellular location is the membrane. Its function is as follows. Proton-conducting pore forming subunit of the V0 complex of vacuolar(H+)-ATPase (V-ATPase), a multisubunit enzyme composed of a peripheral complex (V1) that hydrolyzes ATP and a membrane integral complex (V0) that translocates protons. V-ATPase is responsible for acidifying and maintaining the pH of intracellular compartments and in some cell types, is targeted to the plasma membrane, where it is responsible for acidifying the extracellular environment. This is V-type proton ATPase 16 kDa proteolipid subunit c (VHA16) from Manduca sexta (Tobacco hawkmoth).